The chain runs to 347 residues: NADH-ubiquinone oxidoreductase chain 2 (347 aa).

Helical transmembrane passes span 3-23 (PPIL…VMLS), 25-45 (HWLL…PILM), 66-86 (ASML…QWVI), 111-131 (FHFW…MILL), 149-169 (INTN…GWGG), 178-198 (IMAY…TYNP), 201-221 (MVLN…LFML), 237-257 (FPLI…LPPL), 274-294 (NMII…YFYL), and 325-345 (LLPP…MLSV).

The protein belongs to the complex I subunit 2 family. In terms of assembly, core subunit of respiratory chain NADH dehydrogenase (Complex I) which is composed of 45 different subunits. Interacts with TMEM242.

Its subcellular location is the mitochondrion inner membrane. It catalyses the reaction a ubiquinone + NADH + 5 H(+)(in) = a ubiquinol + NAD(+) + 4 H(+)(out). Core subunit of the mitochondrial membrane respiratory chain NADH dehydrogenase (Complex I) which catalyzes electron transfer from NADH through the respiratory chain, using ubiquinone as an electron acceptor. Essential for the catalytic activity and assembly of complex I. The protein is NADH-ubiquinone oxidoreductase chain 2 of Canis lupus familiaris (Dog).